Here is a 226-residue protein sequence, read N- to C-terminus: Ribonuclease 3 (226 aa).

One can recognise an RNase III domain in the interval 6–128 (IQKLQKILGY…LIGSIFLDSN (123 aa)). Glu-41 is a Mg(2+) binding site. Asp-45 is an active-site residue. Mg(2+) contacts are provided by Asn-114 and Glu-117. The active site involves Glu-117. The DRBM domain maps to 155–225 (DPKTRLQEYL…AQNALIKLGI (71 aa)).

Belongs to the ribonuclease III family. In terms of assembly, homodimer. Mg(2+) is required as a cofactor.

The protein localises to the cytoplasm. The catalysed reaction is Endonucleolytic cleavage to 5'-phosphomonoester.. Functionally, digests double-stranded RNA. Involved in the processing of primary rRNA transcript to yield the immediate precursors to the large and small rRNAs (23S and 16S). Processes some mRNAs, and tRNAs when they are encoded in the rRNA operon. Processes pre-crRNA and tracrRNA of type II CRISPR loci if present in the organism. This chain is Ribonuclease 3, found in Buchnera aphidicola subsp. Baizongia pistaciae (strain Bp).